A 310-amino-acid polypeptide reads, in one-letter code: Ribonuclease Z (310 aa).

Zn(2+) is bound by residues His-60, His-62, Asp-64, His-65, His-140, Asp-209, and His-269. Asp-64 (proton acceptor) is an active-site residue.

Belongs to the RNase Z family. In terms of assembly, homodimer. Zn(2+) is required as a cofactor.

It carries out the reaction Endonucleolytic cleavage of RNA, removing extra 3' nucleotides from tRNA precursor, generating 3' termini of tRNAs. A 3'-hydroxy group is left at the tRNA terminus and a 5'-phosphoryl group is left at the trailer molecule.. Its function is as follows. Zinc phosphodiesterase, which displays some tRNA 3'-processing endonuclease activity. Probably involved in tRNA maturation, by removing a 3'-trailer from precursor tRNA. This is Ribonuclease Z from Methanococcus maripaludis (strain C7 / ATCC BAA-1331).